The chain runs to 447 residues: GTPase Der (447 aa).

EngA-type G domains lie at 4-165 (QIIT…PEEE) and 180-357 (LQIV…KIWN). GTP-binding positions include 10-17 (GRPNVGKS), 57-61 (DTPGL), 119-122 (NKCE), 186-193 (GRPNAGKS), 233-237 (DTAGL), and 298-301 (NKWD). A KH-like domain is found at 358-443 (KKITTSKLNE…PIRFIYVKTK (86 aa)).

This sequence belongs to the TRAFAC class TrmE-Era-EngA-EngB-Septin-like GTPase superfamily. EngA (Der) GTPase family. As to quaternary structure, associates with the 50S ribosomal subunit.

Its function is as follows. GTPase that plays an essential role in the late steps of ribosome biogenesis. This is GTPase Der from Rickettsia africae (strain ESF-5).